Reading from the N-terminus, the 414-residue chain is Serine hydroxymethyltransferase (414 aa).

Residues Leu121 and 125–127 (GHL) contribute to the (6S)-5,6,7,8-tetrahydrofolate site. Position 229 is an N6-(pyridoxal phosphate)lysine (Lys229).

The protein belongs to the SHMT family. In terms of assembly, homodimer. Pyridoxal 5'-phosphate serves as cofactor.

The protein localises to the cytoplasm. It carries out the reaction (6R)-5,10-methylene-5,6,7,8-tetrahydrofolate + glycine + H2O = (6S)-5,6,7,8-tetrahydrofolate + L-serine. The protein operates within one-carbon metabolism; tetrahydrofolate interconversion. It functions in the pathway amino-acid biosynthesis; glycine biosynthesis; glycine from L-serine: step 1/1. Catalyzes the reversible interconversion of serine and glycine with tetrahydrofolate (THF) serving as the one-carbon carrier. This reaction serves as the major source of one-carbon groups required for the biosynthesis of purines, thymidylate, methionine, and other important biomolecules. Also exhibits THF-independent aldolase activity toward beta-hydroxyamino acids, producing glycine and aldehydes, via a retro-aldol mechanism. The polypeptide is Serine hydroxymethyltransferase (Thiobacillus denitrificans (strain ATCC 25259 / T1)).